Reading from the N-terminus, the 178-residue chain is Large ribosomal subunit protein uL6 (178 aa).

Belongs to the universal ribosomal protein uL6 family. Part of the 50S ribosomal subunit.

This protein binds to the 23S rRNA, and is important in its secondary structure. It is located near the subunit interface in the base of the L7/L12 stalk, and near the tRNA binding site of the peptidyltransferase center. The chain is Large ribosomal subunit protein uL6 from Leuconostoc mesenteroides subsp. mesenteroides (strain ATCC 8293 / DSM 20343 / BCRC 11652 / CCM 1803 / JCM 6124 / NCDO 523 / NBRC 100496 / NCIMB 8023 / NCTC 12954 / NRRL B-1118 / 37Y).